The following is a 221-amino-acid chain: CASP-like protein 4B1 (221 aa).

The interval 1-78 is disordered; sequence MAMQLHAASP…HDHHGGGGGG (78 aa). Over 1-87 the chain is Cytoplasmic; sequence MAMQLHAASP…GDEATQLLNG (87 aa). A compositionally biased stretch (pro residues) spans 19-33; that stretch reads SPPPPPPLSPHPEPA. Low complexity predominate over residues 50–62; the sequence is APVATATTPLTPG. Residues 88–108 form a helical membrane-spanning segment; that stretch reads IVLVLRAGAALLSFVAMALVA. Residues 109–125 are Extracellular-facing; it reads SCRHGDWMDFLRYQEYR. Residues 126–146 form a helical membrane-spanning segment; the sequence is YLLGVSVVAFVYSAAQALKNF. Over 147–160 the chain is Cytoplasmic; the sequence is RRRRRGAADASFLD. A helical transmembrane segment spans residues 161 to 181; sequence FAGDQAVAYLLVTASAAALPI. The Extracellular segment spans residues 182–196; it reads TIRMRSAVVNVFTDA. The chain crosses the membrane as a helical span at residues 197–217; the sequence is IAASIALGFLAFAALALSAML. The Cytoplasmic segment spans residues 218–221; sequence SRHA.

This sequence belongs to the Casparian strip membrane proteins (CASP) family. Homodimer and heterodimers.

The protein localises to the cell membrane. In Hordeum vulgare subsp. vulgare (Domesticated barley), this protein is CASP-like protein 4B1.